Consider the following 69-residue polypeptide: Intrepicalcin (69 aa).

Residues 1 to 27 form the signal peptide; it reads MRQNTMTIIFIVFIVTFASLTIYGAEA. A propeptide spanning residues 28–36 is cleaved from the precursor; sequence SEANFLERR. Cystine bridges form between Cys39–Cys53, Cys46–Cys57, and Cys52–Cys68. The interval 59 to 60 is essential for stimulation of [3H]ryanodine binding to RYR1; the sequence is RR.

This sequence belongs to the scorpion calcin family. Expressed by the venom gland.

It is found in the secreted. Functionally, this toxin stabilizes ryanodine receptor 1 (RyR1) opening in a long-lasting subconductance state (55% of the full conductance state). Furthermore, it triggers calcium release from sarcoplasmic vesicles (45.3 nM are enough to induce a sharp release, and 50% of the total calcium is released after toxin (100 nM) addition) probably by acting as a cell-penetrating peptide (CPP). In addition, it has been shown to dose-dependently stimulate ryanodine binding to RyR1 (EC(50)=17.4 nM). It also augments the bell-shaped calcium-[3H]ryanodine binding curve that is maximal at about 10 uM calcium concentration. It binds a different site as ryanodine. It acts synergistically with caffeine. In vivo, intracerebroventricular injection into mice induces neurotoxic symptoms, followed by death. The polypeptide is Intrepicalcin (Thorellius intrepidus (Scorpion)).